The following is a 446-amino-acid chain: Iron-sulfur cluster assembly SufBD family protein PH1385 (446 aa).

The protein belongs to the iron-sulfur cluster assembly SufBD family.

The protein is Iron-sulfur cluster assembly SufBD family protein PH1385 of Pyrococcus horikoshii (strain ATCC 700860 / DSM 12428 / JCM 9974 / NBRC 100139 / OT-3).